The primary structure comprises 499 residues: Centrosomal protein of 57 kDa (499 aa).

Residues 1–16 (MAAASVSAASDSQFSS) are compositionally biased toward low complexity. The tract at residues 1–41 (MAAASVSAASDSQFSSVLAEPSRSNGNMVHHSSSPYVLYPP) is disordered. Polar residues predominate over residues 22 to 35 (SRSNGNMVHHSSSP). S53 is modified (phosphoserine). The segment at 58 to 239 (TFAYPESNSR…RAAELQSGIE (182 aa)) is centrosome localization domain (CLD). A coiled-coil region spans residues 63-242 (ESNSRAIFSA…ELQSGIEANR (180 aa)). 2 disordered regions span residues 255–275 (TSTR…GFRN) and 424–476 (LEKQ…SRKN). Positions 278–490 (GAQPHYRLCL…KDMQTLQNSL (213 aa)) are mediates interaction with microtubules. Residues 388 to 491 (PSEELKDNLE…DMQTLQNSLQ (104 aa)) are a coiled coil. Basic and acidic residues predominate over residues 427 to 443 (QSTDKQKELKGNKKTLD). The span at 448-458 (SSSRSSVITRT) shows a compositional bias: low complexity. Positions 460-474 (SKKDFTKQRPGEKSR) are enriched in basic and acidic residues.

It belongs to the translokin family. Homodimer and homooligomer. Interacts with FGF2 and RAP80. Does not interact with FGF1 or FGF2 isoform 24 kDa. Interacts with microtubules. As to expression, ubiquitous (at protein level).

It localises to the nucleus. The protein localises to the cytoplasm. Its subcellular location is the cytoskeleton. The protein resides in the microtubule organizing center. It is found in the centrosome. Its function is as follows. Centrosomal protein which may be required for microtubule attachment to centrosomes. May act by forming ring-like structures around microtubules. Mediates nuclear translocation and mitogenic activity of the internalized growth factor FGF2. This chain is Centrosomal protein of 57 kDa (Cep57), found in Rattus norvegicus (Rat).